Consider the following 166-residue polypeptide: Large ribosomal subunit protein uL10 (166 aa).

The protein belongs to the universal ribosomal protein uL10 family. In terms of assembly, part of the ribosomal stalk of the 50S ribosomal subunit. The N-terminus interacts with L11 and the large rRNA to form the base of the stalk. The C-terminus forms an elongated spine to which L12 dimers bind in a sequential fashion forming a multimeric L10(L12)X complex.

In terms of biological role, forms part of the ribosomal stalk, playing a central role in the interaction of the ribosome with GTP-bound translation factors. This Pseudomonas fluorescens (strain Pf0-1) protein is Large ribosomal subunit protein uL10.